A 363-amino-acid chain; its full sequence is Heat-inducible transcription repressor HrcA (363 aa).

It belongs to the HrcA family.

Its function is as follows. Negative regulator of class I heat shock genes (grpE-dnaK-dnaJ and groELS operons). Prevents heat-shock induction of these operons. The polypeptide is Heat-inducible transcription repressor HrcA (Rhizobium radiobacter (Agrobacterium tumefaciens)).